The chain runs to 506 residues: GMP synthase [glutamine-hydrolyzing] (506 aa).

Positions 4–192 constitute a Glutamine amidotransferase type-1 domain; the sequence is KLIILDFGSQ…FLDICGMKRD (189 aa). Catalysis depends on Cys-79, which acts as the Nucleophile. Catalysis depends on residues His-167 and Glu-169. The GMPS ATP-PPase domain occupies 193–381; the sequence is WTPASFIEAT…LGMMPHLIHR (189 aa). 220–226 is a binding site for ATP; the sequence is SGGVDSS.

Homodimer.

The catalysed reaction is XMP + L-glutamine + ATP + H2O = GMP + L-glutamate + AMP + diphosphate + 2 H(+). It participates in purine metabolism; GMP biosynthesis; GMP from XMP (L-Gln route): step 1/1. Functionally, catalyzes the synthesis of GMP from XMP. The polypeptide is GMP synthase [glutamine-hydrolyzing] (Porphyromonas gingivalis (strain ATCC BAA-308 / W83)).